The chain runs to 115 residues: Large ribosomal subunit protein bL20 (115 aa).

It belongs to the bacterial ribosomal protein bL20 family.

Functionally, binds directly to 23S ribosomal RNA and is necessary for the in vitro assembly process of the 50S ribosomal subunit. It is not involved in the protein synthesizing functions of that subunit. This chain is Large ribosomal subunit protein bL20, found in Borrelia duttonii (strain Ly).